The chain runs to 538 residues: Mitochondria-eating protein (538 aa).

The tract at residues 1 to 273 (MAENLKRLVS…PRSRSCSRSR (273 aa)) is interaction with YWHAG/14-3-3 protein gamma. A Phosphoserine modification is found at Ser-85. The segment at 97 to 137 (SKVPSLQDTFDRERHKDPSPRDRDMQQLDSNLNSTRSQCNQ) is disordered. Residues 105–122 (TFDRERHKDPSPRDRDMQ) are compositionally biased toward basic and acidic residues. 2 coiled-coil regions span residues 118 to 187 (DRDM…RHRN) and 219 to 256 (DQQDTEAMSDYKKQLRNLKEEIAVLSAEKSALQGRSSR). Residues 123–137 (QLDSNLNSTRSQCNQ) are compositionally biased toward polar residues. 2 positions are modified to phosphoserine: Ser-156 and Ser-159. Disordered stretches follow at residues 173–226 (QLKS…TEAM) and 247–294 (KSAL…SKLS). Residues 181–210 (EDARHRNTDQRSSENRRSEPWSLEERKREQ) show a composition bias toward basic and acidic residues. Residues 211–224 (WNSLKQNADQQDTE) are compositionally biased toward polar residues. Over residues 253-278 (RSSRSRSPSPAPRSRSCSRSRSASPS) the composition is skewed to low complexity. Phosphoserine occurs at positions 287 and 509.

This sequence belongs to the MIEAP family. Interacts (via coiled-coil domains) with BNIP3L (via BH3 domain). Interacts (via coiled-coil domains) with BNIP3 (via BH3 domain). In terms of assembly, interacts with YWHAG/14-3-3 protein gamma; a protein that also plays a role in MALM.

The protein localises to the cytoplasm. It is found in the cytosol. The protein resides in the mitochondrion outer membrane. It localises to the mitochondrion matrix. Key regulator of mitochondrial quality that mediates the repairing or degradation of unhealthy mitochondria in response to mitochondrial damage. Mediator of mitochondrial protein catabolic process (also named MALM) by mediating the degradation of damaged proteins inside mitochondria by promoting the accumulation in the mitochondrial matrix of hydrolases that are characteristic of the lysosomal lumen. Also involved in mitochondrion degradation of damaged mitochondria by promoting the formation of vacuole-like structures (named MIV), which engulf and degrade unhealthy mitochondria by accumulating lysosomes. The physical interaction of SPATA18/MIEAP, BNIP3 and BNIP3L/NIX at the mitochondrial outer membrane regulates the opening of a pore in the mitochondrial double membrane in order to mediate the translocation of lysosomal proteins from the cytoplasm to the mitochondrial matrix. Binds cardiolipin. May form molecular condensates (non-membrane-bounded organelles) within mitochondria that compartmentalize and promote cardiolipin metabolism. In Homo sapiens (Human), this protein is Mitochondria-eating protein (SPATA18).